Consider the following 84-residue polypeptide: Cell division topological specificity factor (84 aa).

Belongs to the MinE family.

Functionally, prevents the cell division inhibition by proteins MinC and MinD at internal division sites while permitting inhibition at polar sites. This ensures cell division at the proper site by restricting the formation of a division septum at the midpoint of the long axis of the cell. The polypeptide is Cell division topological specificity factor (Pseudomonas fluorescens (strain SBW25)).